The following is a 389-amino-acid chain: Nuclear receptor subfamily 2 group F member 1-B (389 aa).

Residues 19-39 form a disordered region; that stretch reads DDQSAAGREHLQHRHSPKSAE. Residues 51-126 constitute a DNA-binding region (nuclear receptor); it reads HVECVVCGDK…VGMRREAVQR (76 aa). 2 consecutive NR C4-type zinc fingers follow at residues 54–74 and 90–109; these read CVVC…CEGC and CRAN…CQYC. In terms of domain architecture, NR LBD spans 152–378; sequence YLSGYISLLL…TLIRDMLLSG (227 aa).

It belongs to the nuclear hormone receptor family. NR2 subfamily. Expressed the retina, where expression is restricted to the outer nuclear layer.

The protein localises to the nucleus. Putative transcription factor that is required in photoreceptor cells precursors during eye development. In Danio rerio (Zebrafish), this protein is Nuclear receptor subfamily 2 group F member 1-B.